Consider the following 238-residue polypeptide: Dolichyldiphosphatase 1 (238 aa).

4 helical membrane passes run 33–53 (LAYLSLSPVFVIVGFVTLIIF), 100–120 (PSSHSQFMWFFSVYSFLFLYL), 130–150 (FLDLLWRHVLSLGLLAAAFLV), and 162–182 (WSQVLYGGIAGGLMAVAWFIF).

It belongs to the dolichyldiphosphatase family.

It is found in the endoplasmic reticulum membrane. The catalysed reaction is a di-trans,poly-cis-dolichyl diphosphate + H2O = a di-trans,poly-cis-dolichyl phosphate + phosphate + H(+). It functions in the pathway protein modification; protein glycosylation. In terms of biological role, required for efficient N-glycosylation. Necessary for maintaining optimal levels of dolichol-linked oligosaccharides. Hydrolyzes dolichyl pyrophosphate at a very high rate and dolichyl monophosphate at a much lower rate. Does not act on phosphatidate. The sequence is that of Dolichyldiphosphatase 1 (DOLPP1) from Callithrix jacchus (White-tufted-ear marmoset).